Reading from the N-terminus, the 974-residue chain is Short transient receptor potential channel 4 (974 aa).

Topologically, residues Met1–Arg324 are cytoplasmic. 4 ANK repeats span residues Leu29–Lys60, Arg71–Asn93, Val96–His118, and Pro141–Gly165. Residues Glu87–His172 are multimerization domain. Zn(2+)-binding residues include His172, Cys176, Cys178, and Cys181. Residues Leu223–Arg260 adopt a coiled-coil conformation. Positions Asp254–Pro304 are multimerization domain. An intramembrane region (discontinuously helical) is located at residues His325–Ile359. Residues Arg360–Pro362 are Cytoplasmic-facing. The chain crosses the membrane as a helical span at residues Phe363–Ala383. Residues Ser384–Glu403 lie on the Extracellular side of the membrane. The helical transmembrane segment at Trp404 to Ile418 threads the bilayer. Ca(2+) is bound by residues Glu417, Gln420, Asn435, and Asp438. Topologically, residues Lys419–Asp432 are cytoplasmic. Residues Trp433–Ile453 form a helical membrane-spanning segment. At Val454–Leu475 the chain is on the extracellular side. The helical transmembrane segment at Val476–Ala498 threads the bilayer. At Asn499–Arg511 the chain is on the cytoplasmic side. A helical transmembrane segment spans residues Met512–Leu534. Residues Asn535–Thr599 are Extracellular-facing. A disulfide bridge links Cys549 with Cys554. Residues Met600–Met620 form a helical membrane-spanning segment. Residues Met615–Leu974 form an interaction with ITPR1, ITPR2 and ITPR3 region. Residues Asn621–Leu974 are Cytoplasmic-facing. The tract at residues Ala765–Arg787 is disordered. Positions Ser773–Lys784 are enriched in basic and acidic residues. Residues Tyr956 and Tyr969 each carry the phosphotyrosine; by FYN modification. The segment at Thr972–Leu974 is PDZ-binding domain.

Belongs to the transient receptor (TC 1.A.4) family. STrpC subfamily. TRPC4 sub-subfamily. As to quaternary structure, homotetramer. Heterotetramer with TRPC1 and/or TRPC5. Forms a heteromeric ion channel with TRPC1, with a 1:3 TRPC1:TRPC4 stoichiometry. Interacts with TRPC4AP. Isoform alpha but not isoform beta interacts with ITPR1, ITPR2 and ITPR3. Interacts with NHERF1. Interacts with MX1 and RNF24. Interacts (via CIRB domain) with SESTD1 (via the spectrin 1 repeat) and SPTBN5 (via C-terminus). Interacts with CDH5 and CTNNB1. Interacts (via protein 4.1-binding domain) with EPB41L2. Interacts with PLSCR1. Abundantly expressed in brain (hippocampal CA1 pyramidal neurons, dentate gyrus granule cells, and cerebral cortical neurons, and in the septal nuclei and the mitral layer of olfactory bulb). Lower levels are detected in other tissues.

The protein resides in the cell membrane. The catalysed reaction is Ca(2+)(in) = Ca(2+)(out). It carries out the reaction Na(+)(in) = Na(+)(out). The enzyme catalyses Li(+)(in) = Li(+)(out). It catalyses the reaction Cs(+)(in) = Cs(+)(out). Its activity is regulated as follows. May be operated by a phosphatidylinositol second messenger system activated by receptor tyrosine kinases or G-protein coupled receptors. May be activated by intracellular calcium store depletion. Its function is as follows. Forms a receptor-activated non-selective calcium permeant cation channel. Acts as a cell-cell contact-dependent endothelial calcium entry channel. Forms a homomeric ion channel or a heteromeric ion channel with TRPC1; the heteromeric ion channel has reduced calcium permeability compared to the homomeric channel. Also permeable to monovalent ions including sodium, lithium and cesium ions. In Mus musculus (Mouse), this protein is Short transient receptor potential channel 4 (Trpc4).